The primary structure comprises 477 residues: Transcription factor Sox-9-A (477 aa).

Disordered stretches follow at residues 1–66 (MNLL…ETED) and 157–274 (EAER…FRDV). Residues 27 to 42 (SDDSAGSPCPSGSGSD) are compositionally biased toward low complexity. Composition is skewed to basic and acidic residues over residues 56–66 (GDQELKKETED) and 157–174 (EAER…DYKY). K61 is covalently cross-linked (Glycyl lysine isopeptide (Lys-Gly) (interchain with G-Cter in SUMO)). The segment at 63–103 (ETEDEKFPVCIREAVSQVLKGYDWTLVPMPVRVNGSSKNKP) is dimerization (DIM). The PQA stretch occupies residues 63–103 (ETEDEKFPVCIREAVSQVLKGYDWTLVPMPVRVNGSSKNKP). Residues 105–173 (VKRPMNAFMV…QHKKDHPDYK (69 aa)) constitute a DNA-binding region (HMG box). Residues 211–222 (SPHSSSSMSEVH) show a composition bias toward low complexity. A transactivation domain (TAM) region spans residues 224–308 (PGEHSGQSQG…LPPNGHPGVG (85 aa)). 2 short sequence motifs (9aaTAD) span residues 276 to 285 (IGELSSEVIS) and 291 to 299 (DVNEFDQYL). The interval 301–384 (PNGHPGVGST…SDQQQQHSPQ (84 aa)) is disordered. Polar residues-rich tracts occupy residues 308 to 328 (GSTQ…SATT) and 346 to 361 (HSLS…SQQR). Residues 361–477 (RTHIKTEQLS…QPVYTQLTRP (117 aa)) are transactivation domain (TAC). K365 participates in a covalent cross-link: Glycyl lysine isopeptide (Lys-Gly) (interchain with G-Cter in SUMO). Residues 370-384 (SPSHYSDQQQQHSPQ) are compositionally biased toward low complexity. The short motif at 428–436 (SGLYSTFSY) is the 9aaTAD 3 element. Residues 446–477 (TPIADTTGVPSIPQTHSPQHWEQPVYTQLTRP) are disordered. Polar residues predominate over residues 453–477 (GVPSIPQTHSPQHWEQPVYTQLTRP).

In terms of assembly, interacts with the sumoylation factors ube2i/ubc9 and sumo1. In terms of processing, sumoylated. Lys-365 is the major site of sumoylation, although sumoylation at Lys-61 also occurs. Sumoylation plays a key role in regulating formation of the neural crest and otic placode. From mid-gastrula (stage 10.5-11), expressed in a ring around the blastopore, with expression decreasing toward the dorsal side. At stage 12, expression around the blastopore decreases and begins to increase lateral to the neural plate in the presumptive neural crest, where expression dramatically increases around stage 14. Also expressed in the otic placode as early as stage 13/14. By the tailbud stage expression is restricted to the otic cup and then throughout the otic vesicle, with more intense staining at the dorsal-most region, the prospective region of the semicircular canals and endolymphatic duct. At the early tailbud stage (stage 23), expressed in migrating cranial neural crest cells and in the trunk neural crest. Also expressed in the genital ridges, developing eye, nasal placode and prospective pineal gland. Around stage 25, expression is down-regulated in the trunk neural crest but persists in the migrating cranial crest cells as they populate the pharyngeal arches, otic placode, developing eye, genital ridges and notochord. By stage 31, expression remains strong in the pharyngeal arches. Also expressed in the pancreas; first expressed at stage 25 in the pancreatic anlagen, dorsally in diverticulum. As development proceeds, expression continues in pancreatic tissue, being restricted to ventral and dorsal pancreatic buds.

It is found in the nucleus. It localises to the cytoplasm. Its function is as follows. Transcription factor that plays a key role in chondrocytes differentiation and skeletal development. Specifically binds the 5'-ACAAAG-3' DNA motif present in enhancers and super-enhancers and promotes expression of genes important for chondrogenesis, including COL2A1. Plays a central role in successive steps of chondrocyte differentiation. Absolutely required for precartilaginous condensation, the first step in chondrogenesis during which skeletal progenitors differentiate into prechondrocytes. Together with SOX5 and SOX6, required for overt chondrogenesis when condensed prechondrocytes differentiate into early stage chondrocytes, the second step in chondrogenesis. Later, required to direct hypertrophic maturation and block osteoblast differentiation of growth plate chondrocytes: maintains chondrocyte columnar proliferation, delays prehypertrophy and then prevents osteoblastic differentiation of chondrocytes. Also required for chondrocyte hypertrophy, both indirectly, by keeping the lineage fate of chondrocytes, and directly, by remaining present in upper hypertrophic cells. Low lipid levels are the main nutritional determinant for chondrogenic commitment of skeletal progenitor cells: when lipids levels are low, FOXO transcription factors promote expression of SOX9, which induces chondrogenic commitment and suppresses fatty acid oxidation. In addition to cartilage development, also acts as a regulator of proliferation and differentiation in epithelial stem/progenitor cells. Involved in development of the cranial neural crest, which is fated to form skeletal elements. Also required for otic placode specification during inner ear development. In Xenopus laevis (African clawed frog), this protein is Transcription factor Sox-9-A (sox9-a).